An 869-amino-acid chain; its full sequence is Histone deacetylase 4 (869 aa).

Disordered regions lie at residues 1–25 (MEEASSSTGSAGGAGPSVPNLPSTS), 128–167 (SSSNGNLSVPQTPTKEHHPTAPTSNRKCDLPRSNSTTISQ), and 180–218 (RSKGESNSQSNLMSNSVTANGNGHDNGRKLKNSNSQVNV). The span at 184–202 (ESNSQSNLMSNSVTANGNG) shows a compositional bias: polar residues. S251 carries the post-translational modification Phosphoserine. Residues 460–802 (CTTGLGYDQA…VQALIGESDD (343 aa)) are histone deacetylase. H608 is an active-site residue.

The protein belongs to the histone deacetylase family. HD type 2 subfamily. As to quaternary structure, interacts with mef-2. Phosphorylated by serine/threonine-protein kinase kin-29 at Ser-251; the phosphorylation inhibits repression of transcription by mef-2. May be phosphorylated by either cyclic-AMP dependent or cyclic-GMP dependent protein kinases. Expressed in body-wall muscle cells, hypodermal seam cells and neuronal cells including sensory amphid neuronal processes, the nerve ring, ventral nerve cords and motor neuronal commissures.

It localises to the nucleus. It carries out the reaction N(6)-acetyl-L-lysyl-[histone] + H2O = L-lysyl-[histone] + acetate. Responsible for the deacetylation of lysine residues on the N-terminal part of the core histones (H2A, H2B, H3 and H4). Histone deacetylation gives a tag for epigenetic repression and plays an important role in transcriptional regulation, cell cycle progression and developmental events. Histone deacetylases act via the formation of large multiprotein complexes. Involved in transduction of sensory signals, together with egl-4, kin-29 and mef-2; binding to transcription factor mef-2 enables negative modulation of chemoreceptor gene expression in chemosensory neurons. May be involved in muscle development. The sequence is that of Histone deacetylase 4 (hda-4) from Caenorhabditis elegans.